An 805-amino-acid chain; its full sequence is Ribosome biogenesis protein ERB1 (805 aa).

A disordered region spans residues 1–105; that stretch reads MVKGRKSQKA…SDFSEDDTKS (105 aa). Residues 8 to 22 are compositionally biased toward basic and acidic residues; that stretch reads QKADKVTKAKKRVAD. Residues 23-75 are compositionally biased toward acidic residues; the sequence is EVDESESEPELQVEGLIDAEAESEDDESFESAEENASAEEDEEDEEDEEDSDA. A required for interaction with NOP7 region spans residues 264 to 382; the sequence is RFVPSKNEAK…LRKVPGYTES (119 aa). Residues 382 to 418 form a required for interaction with YTM1 region; it reads SVRERFERSLDLYLAPRMRKNKLNIDPESLIPELPSP. WD repeat units lie at residues 434–473, 482–522, 590–632, 635–673, 676–715, 719–758, and 775–805; these read GHEGKIRTLSIDPTGIWLATGSDDGSVRIWEILTGREVYR, NPED…YDIE, VCKK…TQSP, KSKGIIMDAKFHPFKPQLFVCSQRYVRIYDLSQQVLVKK, PGARWLSNIDIHPRGDNLIASSYDKRVLWHDLDLAATPYK, YHDKAVRSTTFHKKLPLFCSAADDGFIHIFHATVYDDMMK, and GHLGVLDTIWHPKEAWLFSAGADNTARMWTT.

It belongs to the WD repeat BOP1/ERB1 family. As to quaternary structure, component of the NOP7 complex, composed of ERB1, NOP7 and YTM1. The complex is held together by ERB1, which interacts with NOP7 via its N-terminal domain and with YTM1 via a high-affinity interaction between the seven-bladed beta-propeller domains of the 2 proteins. The NOP7 complex associates with the 66S pre-ribosome.

It localises to the nucleus. The protein resides in the nucleolus. It is found in the nucleoplasm. Its function is as follows. Component of the NOP7 complex, which is required for maturation of the 25S and 5.8S ribosomal RNAs and formation of the 60S ribosome. This Candida glabrata (strain ATCC 2001 / BCRC 20586 / JCM 3761 / NBRC 0622 / NRRL Y-65 / CBS 138) (Yeast) protein is Ribosome biogenesis protein ERB1.